The following is a 301-amino-acid chain: Multifunctional dioxygenase ausE (301 aa).

Residues arginine 72 and glutamine 127 each contribute to the substrate site. Positions 130 and 132 each coordinate Fe cation. Threonine 167 provides a ligand contact to substrate. Histidine 214 serves as a coordination point for Fe cation. Arginine 226 is a substrate binding site.

The protein belongs to the PhyH family. As to quaternary structure, homodimer. It depends on Fe cation as a cofactor.

It catalyses the reaction preaustinoid A1 + 2-oxoglutarate + O2 = preaustinoid A2 + succinate + CO2 + H2O. The enzyme catalyses preaustinoid A2 + 2-oxoglutarate + O2 = preaustinoid A3 + succinate + CO2 + H2O. It carries out the reaction berkeleyone A + 2-oxoglutarate + O2 = preaustinoid A + succinate + CO2 + H2O. It functions in the pathway secondary metabolite biosynthesis; terpenoid biosynthesis. Its function is as follows. Multifunctional dioxygenase; part of the gene cluster A that mediates the biosynthesis of the fungal meroterpenoid acetoxydehydroaustin. The first step of the pathway is the synthesis of 3,5-dimethylorsellinic acid by the polyketide synthase ausA. 3,5-dimethylorsellinic acid is then prenylated by the polyprenyl transferase ausN. Further epoxidation by the FAD-dependent monooxygenase ausM and cyclization by the probable terpene cyclase ausL lead to the formation of protoaustinoid A. Protoaustinoid A is then oxidized to spiro-lactone preaustinoid A3 by the combined action of the FAD-binding monooxygenases ausB and ausC, and the dioxygenase ausE. Acid-catalyzed keto-rearrangement and ring contraction of the tetraketide portion of preaustinoid A3 by ausJ lead to the formation of preaustinoid A4. The aldo-keto reductase ausK, with the help of ausH, is involved in the next step by transforming preaustinoid A4 into isoaustinone which is in turn hydroxylated by the P450 monooxygenase ausI to form austinolide. The cytochrome P450 monooxygenase ausG then modifies austinolide to austinol. Austinol is further acetylated to austin by the O-acetyltransferase ausP, which spontaneously changes to dehydroaustin. The cytochrome P450 monooxygenase then converts dehydroaustin is into 7-dehydrodehydroaustin. The hydroxylation catalyzed by ausR permits the second O-acetyltransferase ausQ to add an additional acetyl group to the molecule, leading to the formation of acetoxydehydroaustin. Due to genetic rearrangements of the clusters and the subsequent loss of some enzymes, the end product of the Penicillium brasilianum austinoid biosynthesis clusters is acetoxydehydroaustin. This is Multifunctional dioxygenase ausE from Penicillium brasilianum.